Consider the following 217-residue polypeptide: Uracil-DNA glycosylase (217 aa).

Catalysis depends on Asp-62, which acts as the Proton acceptor.

It belongs to the uracil-DNA glycosylase (UDG) superfamily. UNG family.

It is found in the cytoplasm. The enzyme catalyses Hydrolyzes single-stranded DNA or mismatched double-stranded DNA and polynucleotides, releasing free uracil.. Excises uracil residues from the DNA which can arise as a result of misincorporation of dUMP residues by DNA polymerase or due to deamination of cytosine. This chain is Uracil-DNA glycosylase, found in Streptococcus suis (strain 98HAH33).